The following is a 174-amino-acid chain: CEN-like protein 1 (174 aa).

This sequence belongs to the phosphatidylethanolamine-binding protein family. Expressed in vegetative axillary meristems but not in the main shoot meristem.

It localises to the cytoplasm. Functionally, may form complexes with phosphorylated ligands by interfering with kinases and their effectors. The polypeptide is CEN-like protein 1 (CET1) (Nicotiana tabacum (Common tobacco)).